A 414-amino-acid polypeptide reads, in one-letter code: Glucose-1-phosphate adenylyltransferase (414 aa).

Alpha-D-glucose 1-phosphate-binding positions include glycine 164, glutamate 184–lysine 185, and serine 204.

The protein belongs to the bacterial/plant glucose-1-phosphate adenylyltransferase family. Homotetramer.

The enzyme catalyses alpha-D-glucose 1-phosphate + ATP + H(+) = ADP-alpha-D-glucose + diphosphate. It functions in the pathway glycan biosynthesis; glycogen biosynthesis. Involved in the biosynthesis of ADP-glucose, a building block required for the elongation reactions to produce glycogen. Catalyzes the reaction between ATP and alpha-D-glucose 1-phosphate (G1P) to produce pyrophosphate and ADP-Glc. This Acidothermus cellulolyticus (strain ATCC 43068 / DSM 8971 / 11B) protein is Glucose-1-phosphate adenylyltransferase.